Consider the following 156-residue polypeptide: ATP synthase subunit b (156 aa).

Residues 7–29 (LIGQSVAFLIFVWFCMKFVWPPL) traverse the membrane as a helical segment.

The protein belongs to the ATPase B chain family. In terms of assembly, F-type ATPases have 2 components, F(1) - the catalytic core - and F(0) - the membrane proton channel. F(1) has five subunits: alpha(3), beta(3), gamma(1), delta(1), epsilon(1). F(0) has three main subunits: a(1), b(2) and c(10-14). The alpha and beta chains form an alternating ring which encloses part of the gamma chain. F(1) is attached to F(0) by a central stalk formed by the gamma and epsilon chains, while a peripheral stalk is formed by the delta and b chains.

Its subcellular location is the cell inner membrane. In terms of biological role, f(1)F(0) ATP synthase produces ATP from ADP in the presence of a proton or sodium gradient. F-type ATPases consist of two structural domains, F(1) containing the extramembraneous catalytic core and F(0) containing the membrane proton channel, linked together by a central stalk and a peripheral stalk. During catalysis, ATP synthesis in the catalytic domain of F(1) is coupled via a rotary mechanism of the central stalk subunits to proton translocation. Component of the F(0) channel, it forms part of the peripheral stalk, linking F(1) to F(0). In Shewanella denitrificans (strain OS217 / ATCC BAA-1090 / DSM 15013), this protein is ATP synthase subunit b.